Consider the following 277-residue polypeptide: Large ribosomal subunit protein uL2 (277 aa).

Disordered regions lie at residues 1-55 (MGIR…RHQG) and 217-277 (KRPS…KKKR). Over residues 37–55 (LHSKGGRNGHGRITARHQG) the composition is skewed to basic residues.

It belongs to the universal ribosomal protein uL2 family. As to quaternary structure, part of the 50S ribosomal subunit. Forms a bridge to the 30S subunit in the 70S ribosome.

In terms of biological role, one of the primary rRNA binding proteins. Required for association of the 30S and 50S subunits to form the 70S ribosome, for tRNA binding and peptide bond formation. It has been suggested to have peptidyltransferase activity; this is somewhat controversial. Makes several contacts with the 16S rRNA in the 70S ribosome. This is Large ribosomal subunit protein uL2 from Thermobifida fusca (strain YX).